A 310-amino-acid polypeptide reads, in one-letter code: MGRSPSSDETGLKKGPWLPEEDDKLINYIHKHGHSSWSALPKLAGLNRCGKSCRLRWTNYLRPDIKRGKFSAEEEETILNLHAVLGNKWSMIASHLPGRTDNEIKNFWNTHLKKKLIQMGFDPMTHQPRTDDIFSSLSQLMSLSNLRGLVDLQQQFPMEDQALLNLQTEMAKLQLFQYLLQPSPAPMSINNINPNILNLLIKENSVTSNIDLGFLSSHLQDFNNNNLPSLKTLDDNHFSQNTSPIWLHEPPSLNQTMLPTHDPCAQSVDGFGSNQASSSHDQEVAVTDSVDWPDHHLFDDSMFPDISYQS.

2 consecutive HTH myb-type domains span residues 9–61 (ETGL…TNYL) and 62–116 (RPDI…KKKL). 2 DNA-binding regions (H-T-H motif) span residues 37–61 (WSAL…TNYL) and 89–112 (WSMI…NTHL).

Interacts with FBX5. As to expression, highly expressed in roots and at lower levels in leaves, stems and flowers.

Its subcellular location is the nucleus. Probable transcription factor. The chain is Transcription factor MYB53 from Arabidopsis thaliana (Mouse-ear cress).